The primary structure comprises 73 residues: Metallothionein (73 aa).

Residues Cys-15, Cys-20, Cys-26, Cys-28, Cys-32, Cys-34, Cys-39, Cys-46, Cys-48, Cys-52, Cys-54, Cys-58, Cys-64, Cys-66, Cys-70, and Cys-72 each contribute to the Cd(2+) site.

It belongs to the metallothionein superfamily. Type 2 family.

The metallothioneins are involved in the cellular sequestration of toxic metal ions. This is Metallothionein from Dreissena polymorpha (Zebra mussel).